The sequence spans 108 residues: Large ribosomal subunit protein uL11 (108 aa).

It belongs to the universal ribosomal protein uL11 family. Part of the ribosomal stalk of the 50S ribosomal subunit. Interacts with L10 and the large rRNA to form the base of the stalk. L10 forms an elongated spine to which L12 dimers bind in a sequential fashion forming a multimeric L10(L12)X complex.

Its function is as follows. Forms part of the ribosomal stalk which helps the ribosome interact with GTP-bound translation factors. This Aeropyrum pernix (strain ATCC 700893 / DSM 11879 / JCM 9820 / NBRC 100138 / K1) protein is Large ribosomal subunit protein uL11 (rpl11).